Consider the following 227-residue polypeptide: MRLTPTERDRLLLFGAAELARARRARGLRLNVPEATALIADTVCEAARDGRRLAEAIAAARAVLGPDDVLPGVADIVTEVHVEAVFDDGSRLAVVTDPIGGGLGDQAPGALLPGPEHTEPEAVVRVLVTNTATVPVSVTSHFHFFEANPRLDFDRAAAYGMRAAVPAGSSVRFGPGESVEIGLVPVGGDRIAIGFAGLVDGPLDAPGAKEEALRRAAACGYLGVEQR.

The urease gamma stretch occupies residues 1 to 101 (MRLTPTERDR…LAVVTDPIGG (101 aa)). The segment at 102–227 (GLGDQAPGAL…ACGYLGVEQR (126 aa)) is urease beta.

The protein in the N-terminal section; belongs to the urease gamma subunit family. This sequence in the C-terminal section; belongs to the urease beta subunit family. As to quaternary structure, heterohexamer of 3 UreC (alpha) and 3 UreAB (gamma/beta) subunits.

Its subcellular location is the cytoplasm. It carries out the reaction urea + 2 H2O + H(+) = hydrogencarbonate + 2 NH4(+). It functions in the pathway nitrogen metabolism; urea degradation; CO(2) and NH(3) from urea (urease route): step 1/1. This Streptomyces avermitilis (strain ATCC 31267 / DSM 46492 / JCM 5070 / NBRC 14893 / NCIMB 12804 / NRRL 8165 / MA-4680) protein is Urease subunit gamma/beta.